The following is a 547-amino-acid chain: MAIPGRQYGLILPKKTQPLNRVLQKPSVFGNDSDDDEASVSESLQREAAKKQAMRQTKLEIQKALAEDSTVYEYDSIYDEMQKKKEENNPKLLMGKDRKPKYIHNLLKAVEIRKKEQEKRMEKKIQREREMEKGEFDDKEAFVTSAYKKKLEERAEEEEREKRAAALEARLDVTKQKDLSGFYRHLLNQAVGEEAVPKSSFREARTVIKEEKLRGYPDETNSENRPQQNCALQSGVEEAEENPDADSDSEESCDDGERGDHKVKSRGEEDTGASTKYLKHHKNHTHSRSSSEEGGLSTKYHSRSSQSRGHEHKGGQHQDRQSRDQESCHKDRSHREEKSSHRHREASHKDHHWKRHEHEDKPKGRGQGERQDREWKREKYSSREQEKDRQWNDHDRYSEKEKKGKEKEEHRKARRERCEDGAKYRERKKPEGSGQSSERHRDRRESSPRPRPEDDLLDQERSSKARNTEKDKGEQGKPPRSETSLATKHRLTEERPEKGSQPERPPEAVSKFAKRSNEETVMSARDRYLARQMARINAKTYIEKEDD.

Residues 25–51 (KPSVFGNDSDDDEASVSESLQREAAKK) form a disordered region. A phosphoserine mark is found at serine 27 and serine 33. A coiled-coil region spans residues 103–177 (IHNLLKAVEI…EARLDVTKQK (75 aa)). Positions 105–169 (NLLKAVEIRK…REKRAAALEA (65 aa)) are necessary for alternative splicing activity. Residues 188–523 (NQAVGEEAVP…KRSNEETVMS (336 aa)) are disordered. Glycyl lysine isopeptide (Lys-Gly) (interchain with G-Cter in SUMO2) cross-links involve residues lysine 198 and lysine 209. A compositionally biased stretch (basic and acidic residues) spans 200–217 (SFREARTVIKEEKLRGYP). Over residues 223–232 (ENRPQQNCAL) the composition is skewed to polar residues. Over residues 237–254 (EEAEENPDADSDSEESCD) the composition is skewed to acidic residues. A phosphoserine mark is found at serine 247 and serine 252. A compositionally biased stretch (basic and acidic residues) spans 255–269 (DGERGDHKVKSRGEE). Lysine 276 carries the post-translational modification N6-acetyllysine. Basic residues predominate over residues 277–287 (YLKHHKNHTHS). Residue lysine 279 forms a Glycyl lysine isopeptide (Lys-Gly) (interchain with G-Cter in SUMO2) linkage. Residues 308–339 (RGHEHKGGQHQDRQSRDQESCHKDRSHREEKS) are compositionally biased toward basic and acidic residues. Residues 340 to 355 (SHRHREASHKDHHWKR) are compositionally biased toward basic residues. Composition is skewed to basic and acidic residues over residues 356-480 (HEHE…KPPR) and 490-506 (RLTEERPEKGSQPERPP). A coiled-coil region spans residues 376 to 417 (KREKYSSREQEKDRQWNDHDRYSEKEKKGKEKEEHRKARRER). Serine 447 is modified (phosphoserine).

The protein belongs to the NSRP1 family. Interacts (via C-terminus) with SRSF1. Interacts (via C-terminus) with SRSF2.

The protein resides in the nucleus. The protein localises to the nucleus speckle. Its function is as follows. RNA-binding protein that mediates pre-mRNA alternative splicing regulation. This Rattus norvegicus (Rat) protein is Nuclear speckle splicing regulatory protein 1 (Nsrp1).